The following is a 312-amino-acid chain: Putative 1-aminocyclopropane-1-carboxylate deaminase (312 aa).

An N6-(pyridoxal phosphate)lysine modification is found at K42.

It belongs to the ACC deaminase/D-cysteine desulfhydrase family. The cofactor is pyridoxal 5'-phosphate.

The catalysed reaction is 1-aminocyclopropane-1-carboxylate + H2O = 2-oxobutanoate + NH4(+). In Thermotoga maritima (strain ATCC 43589 / DSM 3109 / JCM 10099 / NBRC 100826 / MSB8), this protein is Putative 1-aminocyclopropane-1-carboxylate deaminase.